Reading from the N-terminus, the 562-residue chain is ATP synthase subunit beta, mitochondrial (562 aa).

2 stretches are compositionally biased toward low complexity: residues 1 to 13 (MASRRLLSSLLRS) and 20 to 40 (SKSPISNINPKLSSSSPSSKS). Disordered regions lie at residues 1 to 43 (MASR…SRAS) and 58 to 83 (SAAAAAPPQPPPAKPEGGKGGGKITD). Residues 1-55 (MASRRLLSSLLRSSSRRSVSKSPISNINPKLSSSSPSSKSRASPYGYLLTRAAEY) constitute a mitochondrion transit peptide. 237 to 244 (GGAGVGKT) contributes to the ATP binding site.

This sequence belongs to the ATPase alpha/beta chains family. As to quaternary structure, F-type ATPases have 2 components, CF(1) - the catalytic core - and CF(0) - the membrane proton channel. CF(1) has five subunits: alpha(3), beta(3), gamma(1), delta(1), epsilon(1). CF(0) has three main subunits: a, b and c.

The protein localises to the mitochondrion. It is found in the mitochondrion inner membrane. The catalysed reaction is ATP + H2O + 4 H(+)(in) = ADP + phosphate + 5 H(+)(out). In terms of biological role, mitochondrial membrane ATP synthase (F(1)F(0) ATP synthase or Complex V) produces ATP from ADP in the presence of a proton gradient across the membrane which is generated by electron transport complexes of the respiratory chain. F-type ATPases consist of two structural domains, F(1) - containing the extramembraneous catalytic core, and F(0) - containing the membrane proton channel, linked together by a central stalk and a peripheral stalk. During catalysis, ATP synthesis in the catalytic domain of F(1) is coupled via a rotary mechanism of the central stalk subunits to proton translocation. Subunits alpha and beta form the catalytic core in F(1). Rotation of the central stalk against the surrounding alpha(3)beta(3) subunits leads to hydrolysis of ATP in three separate catalytic sites on the beta subunits. This chain is ATP synthase subunit beta, mitochondrial (ATPB), found in Hevea brasiliensis (Para rubber tree).